We begin with the raw amino-acid sequence, 156 residues long: Large ribosomal subunit protein uL22 (156 aa).

The protein belongs to the universal ribosomal protein uL22 family. In terms of assembly, part of the 50S ribosomal subunit.

This protein binds specifically to 23S rRNA. It makes multiple contacts with different domains of the 23S rRNA in the assembled 50S subunit and ribosome. In terms of biological role, the globular domain of the protein is located near the polypeptide exit tunnel on the outside of the subunit, while an extended beta-hairpin is found that lines the wall of the exit tunnel in the center of the 70S ribosome. The polypeptide is Large ribosomal subunit protein uL22 (Sulfolobus acidocaldarius (strain ATCC 33909 / DSM 639 / JCM 8929 / NBRC 15157 / NCIMB 11770)).